The primary structure comprises 367 residues: 3-dehydroquinate synthase (367 aa).

NAD(+) contacts are provided by residues 69–74 (DGEAFK), 103–107 (GVIGD), 127–128 (TT), Lys-140, and Lys-149. Glu-182, His-245, and His-262 together coordinate Zn(2+).

This sequence belongs to the sugar phosphate cyclases superfamily. Dehydroquinate synthase family. Co(2+) is required as a cofactor. It depends on Zn(2+) as a cofactor. NAD(+) serves as cofactor.

It localises to the cytoplasm. The catalysed reaction is 7-phospho-2-dehydro-3-deoxy-D-arabino-heptonate = 3-dehydroquinate + phosphate. Its pathway is metabolic intermediate biosynthesis; chorismate biosynthesis; chorismate from D-erythrose 4-phosphate and phosphoenolpyruvate: step 2/7. Its function is as follows. Catalyzes the conversion of 3-deoxy-D-arabino-heptulosonate 7-phosphate (DAHP) to dehydroquinate (DHQ). This is 3-dehydroquinate synthase from Pseudomonas savastanoi pv. phaseolicola (strain 1448A / Race 6) (Pseudomonas syringae pv. phaseolicola (strain 1448A / Race 6)).